The sequence spans 195 residues: Imidazoleglycerol-phosphate dehydratase (195 aa).

The protein belongs to the imidazoleglycerol-phosphate dehydratase family.

It localises to the cytoplasm. It carries out the reaction D-erythro-1-(imidazol-4-yl)glycerol 3-phosphate = 3-(imidazol-4-yl)-2-oxopropyl phosphate + H2O. It functions in the pathway amino-acid biosynthesis; L-histidine biosynthesis; L-histidine from 5-phospho-alpha-D-ribose 1-diphosphate: step 6/9. The chain is Imidazoleglycerol-phosphate dehydratase from Cupriavidus pinatubonensis (strain JMP 134 / LMG 1197) (Cupriavidus necator (strain JMP 134)).